An 82-amino-acid polypeptide reads, in one-letter code: Putative membrane protein insertion efficiency factor (82 aa).

Belongs to the UPF0161 family.

It is found in the cell inner membrane. Could be involved in insertion of integral membrane proteins into the membrane. The protein is Putative membrane protein insertion efficiency factor of Rickettsia peacockii (strain Rustic).